Consider the following 366-residue polypeptide: Aminomethyltransferase (366 aa).

This sequence belongs to the GcvT family. The glycine cleavage system is composed of four proteins: P, T, L and H.

The catalysed reaction is N(6)-[(R)-S(8)-aminomethyldihydrolipoyl]-L-lysyl-[protein] + (6S)-5,6,7,8-tetrahydrofolate = N(6)-[(R)-dihydrolipoyl]-L-lysyl-[protein] + (6R)-5,10-methylene-5,6,7,8-tetrahydrofolate + NH4(+). Its function is as follows. The glycine cleavage system catalyzes the degradation of glycine. This chain is Aminomethyltransferase, found in Bacillus cereus (strain 03BB102).